We begin with the raw amino-acid sequence, 232 residues long: Probable thiopurine S-methyltransferase (232 aa).

S-adenosyl-L-methionine-binding positions include 14 to 25 (WENRWQEGRTGF), Leu-54, Glu-75, and Arg-137. Residue Phe-25 coordinates substrate.

This sequence belongs to the class I-like SAM-binding methyltransferase superfamily. TPMT family.

The protein resides in the cytoplasm. It carries out the reaction S-adenosyl-L-methionine + a thiopurine = S-adenosyl-L-homocysteine + a thiopurine S-methylether.. In Danio rerio (Zebrafish), this protein is Probable thiopurine S-methyltransferase (tpmt).